We begin with the raw amino-acid sequence, 436 residues long: Protein translocase subunit SecY (436 aa).

8 consecutive transmembrane segments (helical) span residues 17 to 37 (ILLT…PVPY), 72 to 92 (FGLL…IQLL), 122 to 142 (TFFW…EVIF), 146 to 166 (LQVY…VLWF), 209 to 229 (FSNI…CIYI), 269 to 289 (VMPL…FEII), 309 to 329 (ISYW…IFFF), and 380 to 400 (IFLI…NLNI).

Belongs to the SecY/SEC61-alpha family. As to quaternary structure, component of the plastid Sec protein translocase complex, which is composed of at least SecY and SecE.

It is found in the plastid. The protein resides in the chloroplast thylakoid membrane. Functionally, the central subunit of the protein translocation channel SecYE. Consists of two halves. These two domains form a lateral gate at the front which open onto the bilayer between TMs 2 and 7, and are clamped together by SecE at the back. The channel is closed by both a pore ring composed of hydrophobic SecY resides and a short helix (helix 2A) on the extracellular side of the membrane which forms a plug. In Vaucheria litorea (Yellow-green alga), this protein is Protein translocase subunit SecY.